The sequence spans 451 residues: Phosphoglucosamine mutase (451 aa).

Serine 102 (phosphoserine intermediate) is an active-site residue. Positions 102, 243, 245, and 247 each coordinate Mg(2+). Serine 102 carries the phosphoserine modification.

This sequence belongs to the phosphohexose mutase family. Mg(2+) is required as a cofactor. In terms of processing, activated by phosphorylation.

The catalysed reaction is alpha-D-glucosamine 1-phosphate = D-glucosamine 6-phosphate. Functionally, catalyzes the conversion of glucosamine-6-phosphate to glucosamine-1-phosphate. The protein is Phosphoglucosamine mutase of Sinorhizobium medicae (strain WSM419) (Ensifer medicae).